Reading from the N-terminus, the 159-residue chain is Cyclic pyranopterin monophosphate synthase (159 aa).

Residues 75 to 77 (LCH) and 113 to 114 (ME) contribute to the substrate site. Aspartate 128 is a catalytic residue.

The protein belongs to the MoaC family. As to quaternary structure, homohexamer; trimer of dimers.

It catalyses the reaction (8S)-3',8-cyclo-7,8-dihydroguanosine 5'-triphosphate = cyclic pyranopterin phosphate + diphosphate. Its pathway is cofactor biosynthesis; molybdopterin biosynthesis. In terms of biological role, catalyzes the conversion of (8S)-3',8-cyclo-7,8-dihydroguanosine 5'-triphosphate to cyclic pyranopterin monophosphate (cPMP). This chain is Cyclic pyranopterin monophosphate synthase, found in Burkholderia multivorans (strain ATCC 17616 / 249).